The primary structure comprises 417 residues: Serine hydroxymethyltransferase (417 aa).

Lys-54 carries the N6-acetyllysine modification. Residues Leu-121 and 125 to 127 (GHL) each bind (6S)-5,6,7,8-tetrahydrofolate. Lys-229 carries the N6-(pyridoxal phosphate)lysine modification. Residues Lys-250, Lys-285, and Lys-354 each carry the N6-acetyllysine modification. 355–357 (SPF) provides a ligand contact to (6S)-5,6,7,8-tetrahydrofolate. Lys-375 carries the N6-acetyllysine modification.

It belongs to the SHMT family. In terms of assembly, homodimer. The cofactor is pyridoxal 5'-phosphate.

It is found in the cytoplasm. The enzyme catalyses (6R)-5,10-methylene-5,6,7,8-tetrahydrofolate + glycine + H2O = (6S)-5,6,7,8-tetrahydrofolate + L-serine. The protein operates within one-carbon metabolism; tetrahydrofolate interconversion. Its pathway is amino-acid biosynthesis; glycine biosynthesis; glycine from L-serine: step 1/1. Catalyzes the reversible interconversion of serine and glycine with tetrahydrofolate (THF) serving as the one-carbon carrier. This reaction serves as the major source of one-carbon groups required for the biosynthesis of purines, thymidylate, methionine, and other important biomolecules. Also exhibits THF-independent aldolase activity toward beta-hydroxyamino acids, producing glycine and aldehydes, via a retro-aldol mechanism. The chain is Serine hydroxymethyltransferase from Shigella sonnei (strain Ss046).